The sequence spans 212 residues: Probable GTP-binding protein EngB (212 aa).

The 173-residue stretch at 38-210 folds into the EngB-type G domain; sequence SLPEIAFVGK…KASLAKCIKF (173 aa). GTP is bound by residues 46–53, 73–77, 91–94, 158–161, and 189–191; these read GKSNVGKS, GRTRQ, DLPG, TKSD, and VSN. Mg(2+) contacts are provided by serine 53 and threonine 75.

This sequence belongs to the TRAFAC class TrmE-Era-EngA-EngB-Septin-like GTPase superfamily. EngB GTPase family. It depends on Mg(2+) as a cofactor.

Its function is as follows. Necessary for normal cell division and for the maintenance of normal septation. This is Probable GTP-binding protein EngB from Rickettsia rickettsii (strain Sheila Smith).